The sequence spans 226 residues: Myosin regulatory light chain 10 (226 aa).

EF-hand domains are found at residues 84-119, 154-189, and 190-225; these read NSPASASQAFTIMDQNRDGFIDKEDLRDTFAALGRI, DPEETILHAFKVFDTEGKGFVKADVIKEKLMTQADR, and FSEEEVKQMFAAFPPDVCGNLDYRNLCYVITHGEEK. Ca(2+)-binding residues include Asp97, Asn99, Asp101, and Asp108.

In terms of assembly, myosin is a hexamer of 2 heavy chains and 4 light chains.

The sequence is that of Myosin regulatory light chain 10 (MYL10) from Homo sapiens (Human).